Here is a 355-residue protein sequence, read N- to C-terminus: Proto-oncogene Wnt-3 (355 aa).

Positions Met1 to Ala21 are cleaved as a signal peptide. Cystine bridges form between Cys80/Cys91, Cys131/Cys139, Cys141/Cys158, Cys206/Cys220, Cys208/Cys215, Cys284/Cys315, Cys300/Cys310, Cys314/Cys354, Cys330/Cys345, Cys332/Cys342, and Cys337/Cys338. Residue Asn90 is glycosylated (N-linked (GlcNAc...) asparagine). A lipid anchor (O-palmitoleoyl serine; by PORCN) is attached at Ser212. An N-linked (GlcNAc...) asparagine glycan is attached at Asn301.

The protein belongs to the Wnt family. As to quaternary structure, forms a soluble 1:1 complex with AFM; this prevents oligomerization and is required for prolonged biological activity. The complex with AFM may represent the physiological form in body fluids. Interacts with PORCN. Interacts with WLS. In terms of processing, palmitoleoylation is required for efficient binding to frizzled receptors. Depalmitoleoylation leads to Wnt signaling pathway inhibition. In terms of tissue distribution, detected at low levels in adult brain. Dorsal portion of the neural tube, dorsal ectoderm, the branchial arches, and the limb buds.

The protein localises to the secreted. Its subcellular location is the extracellular space. It localises to the extracellular matrix. Functionally, ligand for members of the frizzled family of seven transmembrane receptors. Functions in the canonical Wnt signaling pathway that results in activation of transcription factors of the TCF/LEF family. Required for normal gastrulation, formation of the primitive streak, and for the formation of the mesoderm during early embryogenesis. Required for normal formation of the apical ectodermal ridge and for normal embryonic limb development. In Mus musculus (Mouse), this protein is Proto-oncogene Wnt-3 (Wnt3).